Here is a 263-residue protein sequence, read N- to C-terminus: Methylesterase 18 (263 aa).

Ser80 (acyl-ester intermediate) is an active-site residue. Residues Asp212 and His240 each act as charge relay system in the active site.

The protein belongs to the AB hydrolase superfamily. Methylesterase family.

It carries out the reaction methyl (indol-3-yl)acetate + H2O = (indol-3-yl)acetate + methanol + H(+). The protein operates within plant hormone biosynthesis. Functionally, methylesterase shown to have methyl indole-3-acetic acid (MeIAA) esterase activity in vitro. The chain is Methylesterase 18 from Arabidopsis thaliana (Mouse-ear cress).